The sequence spans 182 residues: Isopentenyl-diphosphate Delta-isomerase (182 aa).

2 residues coordinate Mn(2+): His-25 and His-32. The Nudix hydrolase domain maps to 30–164 (LLHLAFSSWL…PWAFSPWMVM (135 aa)). Cys-67 is an active-site residue. Residue His-69 participates in Mn(2+) binding. Glu-87 is a binding site for Mg(2+). Positions 114 and 116 each coordinate Mn(2+). The active site involves Glu-116.

It belongs to the IPP isomerase type 1 family. In terms of assembly, homodimer. It depends on Mg(2+) as a cofactor. Mn(2+) serves as cofactor.

It localises to the cytoplasm. It catalyses the reaction isopentenyl diphosphate = dimethylallyl diphosphate. Its pathway is isoprenoid biosynthesis; dimethylallyl diphosphate biosynthesis; dimethylallyl diphosphate from isopentenyl diphosphate: step 1/1. Functionally, catalyzes the 1,3-allylic rearrangement of the homoallylic substrate isopentenyl (IPP) to its highly electrophilic allylic isomer, dimethylallyl diphosphate (DMAPP). This chain is Isopentenyl-diphosphate Delta-isomerase, found in Escherichia coli (strain SMS-3-5 / SECEC).